Here is a 619-residue protein sequence, read N- to C-terminus: MSANNPSCASRDPPPKKVRTFFSSIRRLSRPICIDDFIDITADLGDTIGAALKSFQQNNACTQEQSEQFTREVYDVCKNILQENKFRNEMFGFVADMNLLNLFALFRSYKQRVRTHFGKQLLCATASSQIIRFFLERVIRHTDKWFLLAPCNGLILPQELAKEMYVLLSEARGKALNQGRMFSGGRQNMMNAAKKVLTVYSSLRDDGEISPEVKAYMAYIFPVPDIEQVFQPLFKLEQEIRKGKATLTQSLLFAPRKRCPNKTVFSQYGARQRYVLPEVLLEASEPQSTLAYGCPDISSLLRDSSSTQENTDEESGPCCSKTLSPGVPQPQSEYDPSPTSPPDSDTESCDSQVRPESTDSDTHAEDDDVPEAPQAASQTQPTTTQETQSCCSVYNPATTQTGFYYNQQSSDNFASRIDASATSTSYGYPGPVTNHGFSTSVFSHTVPTTATGQQQLHQNMYGGGQQTTTYGSYVGGYSDANGQSVGASTSYYTSKPATSRSSTALQWTTLFPPASSSASSSQVSDYFSGFPYFPGSSTVPQAFEPLAPSTPSLLDELLDRDSGLVSQQQAPAPPQNDQGGPPQYVPVAQEQQQSSTDPLSDEMRRIFEFFDSVNPVTRP.

2 disordered regions span residues 301–389 (LRDS…ETQS) and 563–603 (GLVS…SDEM). Composition is skewed to low complexity over residues 371-389 (EAPQAASQTQPTTTQETQS) and 567-582 (QQQAPAPPQNDQGGPP). Residues 589-598 (QEQQQSSTDP) show a composition bias toward polar residues.

The protein belongs to the herpesviridae TAF50 family.

Functionally, transcription activation. This chain is Putative transcription activator BRLF1 homolog (50), found in Connochaetes taurinus (Blue wildebeest).